The following is a 69-amino-acid chain: DNA-directed RNA polymerase subunit epsilon (69 aa).

This sequence belongs to the RNA polymerase subunit epsilon family. RNAP is composed of a core of 2 alpha, a beta and a beta' subunit. The core is associated with a delta subunit, and at least one of epsilon or omega. When a sigma factor is associated with the core the holoenzyme is formed, which can initiate transcription.

It carries out the reaction RNA(n) + a ribonucleoside 5'-triphosphate = RNA(n+1) + diphosphate. Functionally, a non-essential component of RNA polymerase (RNAP). This Shouchella clausii (strain KSM-K16) (Alkalihalobacillus clausii) protein is DNA-directed RNA polymerase subunit epsilon.